Here is a 208-residue protein sequence, read N- to C-terminus: Ectodysplasin-A receptor-associated adapter protein (208 aa).

Residues 1 to 18 (MASPDDPLRSDHMAKEPV) show a composition bias toward basic and acidic residues. Residues 1–99 (MASPDDPLRS…KGSCSCPSCS (99 aa)) form a disordered region. A compositionally biased stretch (polar residues) spans 49–61 (TVNSNCPPNSDDQ). The region spanning 116–195 (DTIRIKLDPC…KILRRWVDEE (80 aa)) is the Death domain.

Binds EDAR. Self-associates and binds TRAF1, TRAF2 and TRAF3.

It localises to the cytoplasm. Its function is as follows. Adapter protein that interacts with EDAR DEATH domain and couples the receptor to EDA signaling pathway during morphogenesis of ectodermal organs. Mediates the activation of NF-kappa-B. This chain is Ectodysplasin-A receptor-associated adapter protein (Edaradd), found in Mus musculus (Mouse).